A 242-amino-acid chain; its full sequence is Ubiquinone biosynthesis O-methyltransferase (242 aa).

S-adenosyl-L-methionine contacts are provided by Arg-36, Gly-56, Asp-77, and Met-130.

Belongs to the methyltransferase superfamily. UbiG/COQ3 family.

The enzyme catalyses a 3-demethylubiquinol + S-adenosyl-L-methionine = a ubiquinol + S-adenosyl-L-homocysteine + H(+). It catalyses the reaction a 3-(all-trans-polyprenyl)benzene-1,2-diol + S-adenosyl-L-methionine = a 2-methoxy-6-(all-trans-polyprenyl)phenol + S-adenosyl-L-homocysteine + H(+). It functions in the pathway cofactor biosynthesis; ubiquinone biosynthesis. In terms of biological role, O-methyltransferase that catalyzes the 2 O-methylation steps in the ubiquinone biosynthetic pathway. This chain is Ubiquinone biosynthesis O-methyltransferase, found in Pasteurella multocida (strain Pm70).